We begin with the raw amino-acid sequence, 1062 residues long: MPQPAIIAKLEQQLRITIAPFDAPDLKAFMRYGRKGDDNSQYFLKDGKLTGLKLRTLGLKDTSFLEERELAGLQGLYLAENDFSSLQLPGHLQQLRLLHLADNKELKTLEFAGSMPLLEEIDLSDSGIQTLQLPACPALQKLDVSRSKLEAFSFASACPALWWLDLSGNGELRKLKMPAGFKALQYLYLYKSGIQELQINGKLPKLVVLDLEGNQLKQWPEKLLLPEGLETLYLEGNPIENIPETIRGSGERHNSVEDVRQYLLSIIDEDKVEYLHQAKMILVGNGEVGKTSIRLKLLDSKATLPKKKDRTQGLDIVPYELKALSPDLTGLEDAIDFQLNIWDFGGQGKYREVQQLFFSPQSLYLFVTACDDTPEDKESYVTFDYWMSLVHALSYDREQERSSPVIHVVNKIDKERMDIDQTAHNRFGNVEEFHAISCKHLTNFEALRKAIPRVLPKVGQGIFRDQYNEDWLGVMEELQRRQGEHHITYQEYRDEVCKDRLNDGEARAWLRILDRIGTVIYFGENEKLKDWIILNPNWVKQAVFEVIDSGERNPVPQWRFEKQIWSHYSEKEREKLFELLQAYDLAYKQQNAFGEQEFVVPALLEHESPNYQDLLPQEELPLKLRFAFKPILPAGTVNKLMVRLKDYIYRGLMWKDNVVFHHPDSNAYVQVEEDWQEHFIYLSVYGKQPSVIYETVTSTLKDINNDFKNAKFLKELEFTVEGFDGEEWMKKRLLKKAGADFFNFLWEKPGIHYKEEDEKNIMDQVKELIAKNRVGDALEMLKSLVPAHLEAEVLQLISRYSKLQRDSRMGILANNDENVERNRIVSSILNLASEAERDNDHTGLSDSSDQEDETFTNVTDQTKKILFICSSPSGKNLLDFGKEFKSIGIARQLADSRDDYAEPIIKTSVEADDLLHIMTKYQPDILHISLHSSKSKGLYFENNAGQAEPISAEDFKDIIETYASDPDGKGRIETIVLSCCDSEAYGRAITNFADHIVVTKDLFPDKAAVVYAKDFYRMLFNNKDIGFAHRSATSAIKRKKYPSDGFAHPIHEIPFLIKNDDK.

LRR repeat units lie at residues 70–94, 95–116, 115–141, 142–159, 160–180, 181–203, 204–226, and 228–249; these read LAGL…HLQQ, LRLL…GSMP, MPLL…ALQK, LDVS…SACP, ALWW…MPAG, FKAL…NGKL, PKLV…LLLP, and GLET…IRGS. The region spanning 470 to 660 is the COR domain; it reads DWLGVMEELQ…GLMWKDNVVF (191 aa). The segment at 836–856 is disordered; it reads ERDNDHTGLSDSSDQEDETFT. Residues His-931 and Cys-980 contribute to the active site.

A dedicated protease for substrate gasdermin bGSDM; cleaves the bGSDM precursor, releasing the pore-forming moiety, which integrates into the membrane and triggers cell death. Probably involved in defense against bacteriophages. Expression of bGSDM and this neighboring protease is highly toxic in E.coli. In Unknown prokaryotic organism, this protein is Roc-COR-CHAT protease.